The primary structure comprises 460 residues: Cysteine--tRNA ligase (460 aa).

Residue Cys28 coordinates Zn(2+). A 'HIGH' region motif is present at residues 30–40 (MTVYDYCHLGH). The Zn(2+) site is built by Cys209, His234, and Glu238. Positions 266–270 (KMSKS) match the 'KMSKS' region motif. Lys269 serves as a coordination point for ATP.

Belongs to the class-I aminoacyl-tRNA synthetase family. In terms of assembly, monomer. The cofactor is Zn(2+).

It is found in the cytoplasm. It carries out the reaction tRNA(Cys) + L-cysteine + ATP = L-cysteinyl-tRNA(Cys) + AMP + diphosphate. This Pseudomonas fluorescens (strain Pf0-1) protein is Cysteine--tRNA ligase.